A 546-amino-acid chain; its full sequence is Chaperonin GroEL (546 aa).

Residues 30-33 (TLGP), Lys-51, 87-91 (DGTTT), Gly-415, 479-481 (NAA), and Asp-495 each bind ATP.

It belongs to the chaperonin (HSP60) family. As to quaternary structure, forms a cylinder of 14 subunits composed of two heptameric rings stacked back-to-back. Interacts with the co-chaperonin GroES.

The protein localises to the cytoplasm. It carries out the reaction ATP + H2O + a folded polypeptide = ADP + phosphate + an unfolded polypeptide.. Functionally, together with its co-chaperonin GroES, plays an essential role in assisting protein folding. The GroEL-GroES system forms a nano-cage that allows encapsulation of the non-native substrate proteins and provides a physical environment optimized to promote and accelerate protein folding. This is Chaperonin GroEL from Pseudomonas putida (strain W619).